A 307-amino-acid chain; its full sequence is HPr kinase/phosphorylase (307 aa).

Residues His-136 and Lys-157 contribute to the active site. 151–158 (GESGIGKS) provides a ligand contact to ATP. Ser-158 serves as a coordination point for Mg(2+). Asp-175 serves as the catalytic Proton acceptor; for phosphorylation activity. Proton donor; for dephosphorylation activity. Residues 198-207 (LEVRGMGIID) are important for the catalytic mechanism of both phosphorylation and dephosphorylation. Glu-199 contributes to the Mg(2+) binding site. Arg-240 is an active-site residue. The segment at 261-266 (PIRPGR) is important for the catalytic mechanism of dephosphorylation.

This sequence belongs to the HPrK/P family. Homohexamer. It depends on Mg(2+) as a cofactor.

The catalysed reaction is [HPr protein]-L-serine + ATP = [HPr protein]-O-phospho-L-serine + ADP + H(+). It carries out the reaction [HPr protein]-O-phospho-L-serine + phosphate + H(+) = [HPr protein]-L-serine + diphosphate. Catalyzes the ATP- as well as the pyrophosphate-dependent phosphorylation of a specific serine residue in HPr, a phosphocarrier protein of the phosphoenolpyruvate-dependent sugar phosphotransferase system (PTS). HprK/P also catalyzes the pyrophosphate-producing, inorganic phosphate-dependent dephosphorylation (phosphorolysis) of seryl-phosphorylated HPr (P-Ser-HPr). The two antagonistic activities of HprK/P are regulated by several intracellular metabolites, which change their concentration in response to the absence or presence of rapidly metabolisable carbon sources (glucose, fructose, etc.) in the growth medium. Therefore, by controlling the phosphorylation state of HPr, HPrK/P is a sensor enzyme that plays a major role in the regulation of carbon metabolism and sugar transport: it mediates carbon catabolite repression (CCR), and regulates PTS-catalyzed carbohydrate uptake and inducer exclusion. The polypeptide is HPr kinase/phosphorylase (Clostridium perfringens (strain 13 / Type A)).